Consider the following 490-residue polypeptide: MARFELQKLYIDGGYTDAGSDATFDAINPANGEVLAQVQRATKEDVERAVVSAEKGQKIWAAMTAMERSRILRRAVEILRERNDELAALETLDTGKAFSETKYVDIVTGADVLEYYAGLVPAIEGEQIPLRTTSFVYTRREPLGVVAGIGAWNYPIQIALWKSAPALAAGNAMIFKPSEVTSLTTLKLAEIYTEAGLPDGVFNVLTGSGREVGTWLTEHPRIEKVSFTGGTDTGKKVMASASSSSLKDVTMELGGKSPLIIFDDADLDRAADTAMMANFYSSGQVCTNGTRVFVPSHLKAAFEAKIAERVARIRIGNPEDENTNFGPLVSFPHMESVLGYIAKGKEEGARVLCGGERLTDGEFAKGAFVAPTVFTDCTDDMTIVREEIFGPVMAILTYETEEEVIRRANDTDFGLAAGLVTKDLNRAHRVIHQLEAGICWINAWGESDAKMPVGGYKQSGVGRENGISSLNNFTRIKSVQVELGDYASVF.

Positions 27 and 93 each coordinate K(+). 150–152 (GAW) lines the NAD(+) pocket. Lys-162 (charge relay system) is an active-site residue. 176 to 179 (KPSE) lines the NAD(+) pocket. Val-180 serves as a coordination point for K(+). Residue 230-233 (GTDT) participates in NAD(+) binding. K(+) is bound at residue Leu-246. Catalysis depends on Glu-252, which acts as the Proton acceptor. NAD(+) contacts are provided by Gly-254, Cys-286, and Glu-387. Cys-286 acts as the Nucleophile in catalysis. Residue Cys-286 is modified to Cysteine sulfenic acid (-SOH). K(+) is bound by residues Lys-457 and Gly-460. The active-site Charge relay system is Glu-464.

This sequence belongs to the aldehyde dehydrogenase family. Dimer of dimers. The cofactor is K(+).

It catalyses the reaction betaine aldehyde + NAD(+) + H2O = glycine betaine + NADH + 2 H(+). Its pathway is amine and polyamine biosynthesis; betaine biosynthesis via choline pathway; betaine from betaine aldehyde: step 1/1. Functionally, involved in the biosynthesis of the osmoprotectant glycine betaine. Catalyzes the irreversible oxidation of betaine aldehyde to the corresponding acid. The polypeptide is Betaine aldehyde dehydrogenase (Pseudomonas fluorescens (strain ATCC BAA-477 / NRRL B-23932 / Pf-5)).